The following is an 82-amino-acid chain: uncharacterized protein (82 aa).

A run of 2 helical transmembrane segments spans residues 8–28 (LTTA…LPAP) and 50–70 (LYTL…YFVL).

It localises to the cell membrane. This is an uncharacterized protein from Escherichia coli (strain K12).